A 278-amino-acid chain; its full sequence is Ribosomal RNA small subunit methyltransferase A (278 aa).

Residues asparagine 18, leucine 20, glycine 45, glutamate 66, aspartate 89, and asparagine 110 each coordinate S-adenosyl-L-methionine.

The protein belongs to the class I-like SAM-binding methyltransferase superfamily. rRNA adenine N(6)-methyltransferase family. RsmA subfamily.

Its subcellular location is the cytoplasm. The catalysed reaction is adenosine(1518)/adenosine(1519) in 16S rRNA + 4 S-adenosyl-L-methionine = N(6)-dimethyladenosine(1518)/N(6)-dimethyladenosine(1519) in 16S rRNA + 4 S-adenosyl-L-homocysteine + 4 H(+). Its function is as follows. Specifically dimethylates two adjacent adenosines (A1518 and A1519) in the loop of a conserved hairpin near the 3'-end of 16S rRNA in the 30S particle. May play a critical role in biogenesis of 30S subunits. In Cupriavidus metallidurans (strain ATCC 43123 / DSM 2839 / NBRC 102507 / CH34) (Ralstonia metallidurans), this protein is Ribosomal RNA small subunit methyltransferase A.